The primary structure comprises 148 residues: Macrodomain Ter protein (148 aa).

It belongs to the MatP family. Homodimer.

The protein resides in the cytoplasm. In terms of biological role, required for spatial organization of the terminus region of the chromosome (Ter macrodomain) during the cell cycle. Prevents early segregation of duplicated Ter macrodomains during cell division. Binds specifically to matS, which is a 13 bp signature motif repeated within the Ter macrodomain. This is Macrodomain Ter protein from Haemophilus ducreyi (strain 35000HP / ATCC 700724).